Here is a 917-residue protein sequence, read N- to C-terminus: Auxin response factor 17 (917 aa).

Positions 134-236 (FCKTLTASDT…QLLLGIRRAN (103 aa)) form a DNA-binding region, TF-B3. Residues 571–649 (SVPNALSPFS…RPTAVPVPDP (79 aa)) form a disordered region. Composition is skewed to low complexity over residues 576–594 (LSPF…MTLQ) and 604–620 (SYPD…NTST). A PB1 domain is found at 786-870 (ATFVKVYKSG…SCIKILSPQE (85 aa)).

It belongs to the ARF family. As to quaternary structure, homodimers and heterodimers. In terms of tissue distribution, expressed in roots, culms, leaves and young panicles.

The protein resides in the nucleus. Functionally, auxin response factors (ARFs) are transcriptional factors that bind specifically to the DNA sequence 5'-TGTCTC-3' found in the auxin-responsive promoter elements (AuxREs). This is Auxin response factor 17 (ARF17) from Oryza sativa subsp. japonica (Rice).